The sequence spans 445 residues: Serine--tRNA ligase (445 aa).

250–252 contributes to the L-serine binding site; the sequence is TAE. 281–283 provides a ligand contact to ATP; sequence RAE. Glu304 contacts L-serine. 368 to 371 contacts ATP; that stretch reads EISS. Ser404 provides a ligand contact to L-serine.

This sequence belongs to the class-II aminoacyl-tRNA synthetase family. Type-1 seryl-tRNA synthetase subfamily. In terms of assembly, homodimer. The tRNA molecule binds across the dimer.

It is found in the cytoplasm. The enzyme catalyses tRNA(Ser) + L-serine + ATP = L-seryl-tRNA(Ser) + AMP + diphosphate + H(+). The catalysed reaction is tRNA(Sec) + L-serine + ATP = L-seryl-tRNA(Sec) + AMP + diphosphate + H(+). Its pathway is aminoacyl-tRNA biosynthesis; selenocysteinyl-tRNA(Sec) biosynthesis; L-seryl-tRNA(Sec) from L-serine and tRNA(Sec): step 1/1. Catalyzes the attachment of serine to tRNA(Ser). Is also able to aminoacylate tRNA(Sec) with serine, to form the misacylated tRNA L-seryl-tRNA(Sec), which will be further converted into selenocysteinyl-tRNA(Sec). This is Serine--tRNA ligase from Azorhizobium caulinodans (strain ATCC 43989 / DSM 5975 / JCM 20966 / LMG 6465 / NBRC 14845 / NCIMB 13405 / ORS 571).